The following is a 234-amino-acid chain: Carboxy-S-adenosyl-L-methionine synthase (234 aa).

Residues Y35, 60-62 (GCS), 83-84 (DN), 109-110 (DI), N124, and R191 contribute to the S-adenosyl-L-methionine site.

Belongs to the class I-like SAM-binding methyltransferase superfamily. Cx-SAM synthase family. Homodimer.

The enzyme catalyses prephenate + S-adenosyl-L-methionine = carboxy-S-adenosyl-L-methionine + 3-phenylpyruvate + H2O. Catalyzes the conversion of S-adenosyl-L-methionine (SAM) to carboxy-S-adenosyl-L-methionine (Cx-SAM). The chain is Carboxy-S-adenosyl-L-methionine synthase from Campylobacter hominis (strain ATCC BAA-381 / DSM 21671 / CCUG 45161 / LMG 19568 / NCTC 13146 / CH001A).